A 275-amino-acid chain; its full sequence is Intercellular adhesion molecule 2 (275 aa).

A signal peptide spans 1-24; it reads MSSFGYRTLTVALFALICCPGSDE. The Extracellular portion of the chain corresponds to 25 to 223; sequence KVFEVHVRPK…EIYEPVSDSQ (199 aa). One can recognise an Ig-like C2-type 1 domain in the interval 41–98; that stretch reads KASLEVNCSTTCNQPEVGGLETSLDKILLDEQAQWKHYLVSNISHDTVLQCHFTCSGK. N-linked (GlcNAc...) asparagine glycans are attached at residues Asn-47, Asn-82, Asn-105, Asn-153, Asn-158, Asn-176, and Asn-187. 2 cysteine pairs are disulfide-bonded: Cys-48–Cys-91 and Cys-52–Cys-95. The 71-residue stretch at 127-197 folds into the Ig-like C2-type 2 domain; it reads GKSFTIECRV…FSCLAVLDLI (71 aa). Cys-134 and Cys-190 are disulfide-bonded. Residues 224-248 traverse the membrane as a helical segment; sequence MVIIVTVVSVLLSLFVTSVLLCFIF. Residues 249 to 275 are Cytoplasmic-facing; that stretch reads GQHLRQQRMGTYGVRAAWRRLPQAFRP. The interval 251–275 is required for interaction with EZR, MSN and RDX and co-localization to microvilli; sequence HLRQQRMGTYGVRAAWRRLPQAFRP.

Belongs to the immunoglobulin superfamily. ICAM family. In terms of assembly, interacts with RDX, EZR and MSN.

The protein localises to the membrane. It localises to the cell projection. Its subcellular location is the microvillus. Its function is as follows. ICAM proteins are ligands for the leukocyte adhesion protein LFA-1 (integrin alpha-L/beta-2). ICAM2 may play a role in lymphocyte recirculation by blocking LFA-1-dependent cell adhesion. It mediates adhesive interactions important for antigen-specific immune response, NK-cell mediated clearance, lymphocyte recirculation, and other cellular interactions important for immune response and surveillance. In Gorilla gorilla gorilla (Western lowland gorilla), this protein is Intercellular adhesion molecule 2 (ICAM2).